The chain runs to 215 residues: Adenylate kinase (215 aa).

Residue 10–15 (GAGKGT) participates in ATP binding. The NMP stretch occupies residues 30–59 (STGDMLRAAVKAGSPLGLKVKGVMDSGGLV). Residues Thr-31, Arg-36, 57–59 (GLV), 85–88 (GFPR), and Gln-92 contribute to the AMP site. The interval 122–159 (GRRVHAASGRVYHDLHNPPKVAGKDDETGEDLIQREDD) is LID. ATP is bound by residues Arg-123 and 132–133 (VY). 2 residues coordinate AMP: Arg-156 and Arg-167. Residue Gly-201 coordinates ATP.

Belongs to the adenylate kinase family. In terms of assembly, monomer.

The protein resides in the cytoplasm. The enzyme catalyses AMP + ATP = 2 ADP. It participates in purine metabolism; AMP biosynthesis via salvage pathway; AMP from ADP: step 1/1. Functionally, catalyzes the reversible transfer of the terminal phosphate group between ATP and AMP. Plays an important role in cellular energy homeostasis and in adenine nucleotide metabolism. This is Adenylate kinase from Azotobacter vinelandii (strain DJ / ATCC BAA-1303).